A 172-amino-acid chain; its full sequence is Protein-export protein SecB (172 aa).

This sequence belongs to the SecB family. Homotetramer, a dimer of dimers. One homotetramer interacts with 1 SecA dimer.

The protein localises to the cytoplasm. Functionally, one of the proteins required for the normal export of preproteins out of the cell cytoplasm. It is a molecular chaperone that binds to a subset of precursor proteins, maintaining them in a translocation-competent state. It also specifically binds to its receptor SecA. The protein is Protein-export protein SecB of Xylella fastidiosa (strain Temecula1 / ATCC 700964).